We begin with the raw amino-acid sequence, 630 residues long: Alpha-1,3-mannosyltransferase MNT3 (630 aa).

The Cytoplasmic segment spans residues methionine 1 to arginine 14. Residues leucine 15–alanine 31 form a helical; Signal-anchor for type II membrane protein membrane-spanning segment. Residues serine 32 to asparagine 630 are Lumenal-facing. Residues asparagine 34 and asparagine 168 are each glycosylated (N-linked (GlcNAc...) asparagine).

The protein belongs to the MNN1/MNT family.

The protein localises to the golgi apparatus membrane. Its pathway is protein modification; protein glycosylation. In terms of biological role, mannosyltransferase involved in adding the 4th and 5th mannose residues of O-linked glycans. The protein is Alpha-1,3-mannosyltransferase MNT3 (MNT3) of Saccharomyces cerevisiae (strain ATCC 204508 / S288c) (Baker's yeast).